Here is a 463-residue protein sequence, read N- to C-terminus: Ribosomal protein uS12 methylthiotransferase RimO (463 aa).

An MTTase N-terminal domain is found at 11–126 (PKIGFVSLGC…VMEVVHTHCP (116 aa)). The [4Fe-4S] cluster site is built by Cys-20, Cys-56, Cys-85, Cys-161, Cys-165, and Cys-168. One can recognise a Radical SAM core domain in the interval 147 to 388 (LTPRHYAYLK…MAVAEEVSTA (242 aa)). The TRAM domain occupies 391 to 463 (QRRVGQTMQV…QGHDLVGVPV (73 aa)).

It belongs to the methylthiotransferase family. RimO subfamily. [4Fe-4S] cluster serves as cofactor.

The protein resides in the cytoplasm. The catalysed reaction is L-aspartate(89)-[ribosomal protein uS12]-hydrogen + (sulfur carrier)-SH + AH2 + 2 S-adenosyl-L-methionine = 3-methylsulfanyl-L-aspartate(89)-[ribosomal protein uS12]-hydrogen + (sulfur carrier)-H + 5'-deoxyadenosine + L-methionine + A + S-adenosyl-L-homocysteine + 2 H(+). In terms of biological role, catalyzes the methylthiolation of an aspartic acid residue of ribosomal protein uS12. In Acidovorax sp. (strain JS42), this protein is Ribosomal protein uS12 methylthiotransferase RimO.